Consider the following 160-residue polypeptide: Fluoride-specific ion channel FluC (160 aa).

A run of 4 helical transmembrane segments spans residues 5-25, 34-54, 67-87, and 99-119; these read LFISYGAILGASLRWAIGLLF, FGTLIANLFGCLIIGVLLGLF, FLITGFLGSLTTFSSFSSEVV, and FCVLMMHLFGCLAMTVLGIWI. Positions 74 and 77 each coordinate Na(+).

This sequence belongs to the fluoride channel Fluc/FEX (TC 1.A.43) family.

It localises to the cell inner membrane. It catalyses the reaction fluoride(in) = fluoride(out). Its activity is regulated as follows. Na(+) is not transported, but it plays an essential structural role and its presence is essential for fluoride channel function. Its function is as follows. Fluoride-specific ion channel. Important for reducing fluoride concentration in the cell, thus reducing its toxicity. In Haemophilus influenzae (strain ATCC 51907 / DSM 11121 / KW20 / Rd), this protein is Fluoride-specific ion channel FluC.